Reading from the N-terminus, the 340-residue chain is DnaJ homolog subfamily B member 1 (340 aa).

A J domain is found at 2-70 (GKDYYQTLGL…REIFDRYGEE (69 aa)). At T307 the chain carries Phosphothreonine.

As to quaternary structure, interacts with DNAJC3. Interacts with HSF1 (via transactivation domain); this interaction results in the inhibition of heat shock- and HSF1-induced transcriptional activity during the attenuation and recovery phase period of the heat shock response. Interacts with BAG3.

The protein localises to the cytoplasm. It is found in the nucleus. It localises to the nucleolus. In terms of biological role, interacts with HSP70 and can stimulate its ATPase activity. Stimulates the association between HSC70 and HIP. Negatively regulates heat shock-induced HSF1 transcriptional activity during the attenuation and recovery phase period of the heat shock response. Stimulates ATP hydrolysis and the folding of unfolded proteins mediated by HSPA1A/B (in vitro). This Mus musculus (Mouse) protein is DnaJ homolog subfamily B member 1 (Dnajb1).